We begin with the raw amino-acid sequence, 648 residues long: Serine/threonine-protein phosphatase 1 regulatory subunit PIG1 (648 aa).

A compositionally biased stretch (low complexity) spans 20 to 51; the sequence is STSSFVSSTTSNSFSPLEDSTSASSSTSSSSS. Positions 20–52 are disordered; the sequence is STSSFVSSTTSNSFSPLEDSTSASSSTSSSSSG. Residues 201-331 form the CBM21 domain; the sequence is HSLELSDPVS…NNDYKNYEIT (131 aa). Polar residues predominate over residues 593-609; the sequence is RESSSPEISPLNTTTSL. The tract at residues 593 to 629 is disordered; sequence RESSSPEISPLNTTTSLPFFPGDNMSDSSGEYEERTS.

In terms of biological role, regulates the activity of glycogen synthase. It is most probably a regulatory subunit for protein phosphatase type 1. The polypeptide is Serine/threonine-protein phosphatase 1 regulatory subunit PIG1 (PIG1) (Saccharomyces cerevisiae (strain ATCC 204508 / S288c) (Baker's yeast)).